The primary structure comprises 322 residues: Germ cell-specific gene 1-like protein (322 aa).

The Cytoplasmic portion of the chain corresponds to 1-8; the sequence is MKTSRRGR. Residues 9-29 form a helical membrane-spanning segment; that stretch reads ALLAVALNLLALLFATTAFLT. Residues 30-122 lie on the Extracellular side of the membrane; the sequence is TYWCQGTQRV…FIDLAPASEK (93 aa). A helical transmembrane segment spans residues 123-143; it reads GVLWLSVVSEVLYILLLVVGF. Residues 144-163 lie on the Cytoplasmic side of the membrane; the sequence is SLMCLELVHSSSVIDGLKLN. Residues 164-184 form a helical membrane-spanning segment; sequence AFAAVFTVLSGLLGMVAHMMY. The Extracellular segment spans residues 185–207; that stretch reads TQVFQVTVSLGPEDWRPHSWDYG. A helical membrane pass occupies residues 208–228; it reads WSFCLAWGSFTCCMAASVTTL. Residues 229 to 322 are Cytoplasmic-facing; that stretch reads NSYTKTVIEF…RQCWVLGHWV (94 aa). Serine 274 is subject to Phosphoserine.

Belongs to the GSG1 family. Component of the inner core of AMPAR complexes. AMPAR complexes consist of an inner core made of 4 pore-forming GluA/GRIA proteins (GRIA1, GRIA2, GRIA3 and GRIA4) and 4 major auxiliary subunits arranged in a twofold symmetry. One of the two pairs of distinct binding sites is occupied either by CNIH2, CNIH3 or CACNG2, CACNG3. The other harbors CACNG2, CACNG3, CACNG4, CACNG8 or GSG1L. This inner core of AMPAR complexes is complemented by outer core constituents binding directly to the GluA/GRIA proteins at sites distinct from the interaction sites of the inner core constituents. Outer core constituents include at least PRRT1, PRRT2, CKAMP44/SHISA9, FRRS1L and NRN1. The proteins of the inner and outer core serve as a platform for other, more peripherally associated AMPAR constituents. Alone or in combination, these auxiliary subunits control the gating and pharmacology of the AMPAR complexes and profoundly impact their biogenesis and protein processing. As to expression, expressed in the brain, including hippocampus (at protein level).

The protein localises to the cell membrane. It is found in the synapse. Its function is as follows. As a component of the inner core of AMPAR complexes, modifies AMPA receptor (AMPAR) gating. This chain is Germ cell-specific gene 1-like protein (Gsg1l), found in Mus musculus (Mouse).